The following is a 635-amino-acid chain: 1-deoxy-D-xylulose-5-phosphate synthase (635 aa).

Thiamine diphosphate contacts are provided by residues His72 and 113 to 115 (GHA). Asp144 contacts Mg(2+). Residues 145-146 (GA), Asn174, Tyr286, and Glu369 contribute to the thiamine diphosphate site. Residue Asn174 participates in Mg(2+) binding.

Belongs to the transketolase family. DXPS subfamily. Homodimer. Requires Mg(2+) as cofactor. It depends on thiamine diphosphate as a cofactor.

The catalysed reaction is D-glyceraldehyde 3-phosphate + pyruvate + H(+) = 1-deoxy-D-xylulose 5-phosphate + CO2. The protein operates within metabolic intermediate biosynthesis; 1-deoxy-D-xylulose 5-phosphate biosynthesis; 1-deoxy-D-xylulose 5-phosphate from D-glyceraldehyde 3-phosphate and pyruvate: step 1/1. Its function is as follows. Catalyzes the acyloin condensation reaction between C atoms 2 and 3 of pyruvate and glyceraldehyde 3-phosphate to yield 1-deoxy-D-xylulose-5-phosphate (DXP). The polypeptide is 1-deoxy-D-xylulose-5-phosphate synthase (Acaryochloris marina (strain MBIC 11017)).